The primary structure comprises 459 residues: Protein phosphatase 1M (459 aa).

Residues 1–10 (MSAGWFRRRF) are compositionally biased toward basic residues. The tract at residues 1-64 (MSAGWFRRRF…SRPVRSPARG (64 aa)) is disordered. Over residues 14-27 (EPLPAPRPPGPHAS) the composition is skewed to pro residues. A compositionally biased stretch (low complexity) spans 38 to 48 (RGSSSSPGAAD). Mn(2+) contacts are provided by D125 and G126. The 298-residue stretch at 162–459 (MHLNGRCICP…HSQGQESSDH (298 aa)) folds into the PPM-type phosphatase domain.

The protein belongs to the PP2C family. It depends on Mg(2+) as a cofactor. The cofactor is Mn(2+).

It localises to the nucleus. It carries out the reaction O-phospho-L-seryl-[protein] + H2O = L-seryl-[protein] + phosphate. The enzyme catalyses O-phospho-L-threonyl-[protein] + H2O = L-threonyl-[protein] + phosphate. In Homo sapiens (Human), this protein is Protein phosphatase 1M (PPM1M).